A 607-amino-acid chain; its full sequence is UvrABC system protein C (607 aa).

The region spanning 15–93 (SEPGVYCMLD…IKKYQPRYNI (79 aa)) is the GIY-YIG domain. Residues 202-237 (HEVIADLIKKMEAASQQLNFELAAKVRDQIMLLRKM) form the UVR domain.

This sequence belongs to the UvrC family. As to quaternary structure, interacts with UvrB in an incision complex.

It localises to the cytoplasm. Functionally, the UvrABC repair system catalyzes the recognition and processing of DNA lesions. UvrC both incises the 5' and 3' sides of the lesion. The N-terminal half is responsible for the 3' incision and the C-terminal half is responsible for the 5' incision. The sequence is that of UvrABC system protein C from Pseudoalteromonas translucida (strain TAC 125).